A 202-amino-acid polypeptide reads, in one-letter code: Transmembrane 4 L6 family member 4 (202 aa).

The Cytoplasmic portion of the chain corresponds to 1–9 (MCTGGCARC). Residues 10–30 (LGGTLIPLAVFAVLANILLFF) traverse the membrane as a helical segment. At 31 to 48 (PGGKVVDDNSHLSDEVWY) the chain is on the extracellular side. A helical membrane pass occupies residues 49–69 (FGGILGSGVLMIFPALVFLGL). At 70–93 (QNNDCCGCCGNESCGKRFAMFTST) the chain is on the cytoplasmic side. The helical transmembrane segment at 94–114 (LFAVVGFLGAAYSFIVSAVSI) threads the bilayer. The Extracellular segment spans residues 115-158 (NKGPKCFMTNNTWGYPFHDGDYLNDQALWSKCEEPRDVVPWNLT). N156 carries an N-linked (GlcNAc...) asparagine glycan. A helical transmembrane segment spans residues 159 to 179 (LFSILLVIGGIQMVLCAIQVI). Residues 180-202 (NGLLGTLCGDCQCCGCCGGDRPV) are Cytoplasmic-facing.

The protein belongs to the L6 tetraspanin family. As to expression, expressed in liver and testis. Up-regulated in regenerating liver after partial hepatectomy.

It is found in the membrane. Its function is as follows. Regulates the adhesive and proliferative status of intestinal epithelial cells. Can mediate density-dependent cell proliferation. In Rattus norvegicus (Rat), this protein is Transmembrane 4 L6 family member 4 (Tm4sf4).